The primary structure comprises 72 residues: Prokaryotic ubiquitin-like protein Pup (72 aa).

Residues 1–10 (MATRDSGGGQ) are compositionally biased toward gly residues. The segment at 1 to 41 (MATRDSGGGQQRADRRAEEIDDVATEDTSASDLKERHEKLS) is disordered. The stretch at 27–61 (DTSASDLKERHEKLSEDVDSLLDEIDDVLEENAEE) forms a coiled coil. The tract at residues 28–66 (TSASDLKERHEKLSEDVDSLLDEIDDVLEENAEEFVKGY) is ARC ATPase binding. A compositionally biased stretch (basic and acidic residues) spans 32 to 41 (DLKERHEKLS). Deamidated glutamine is present on Gln-72. Gln-72 is covalently cross-linked (Isoglutamyl lysine isopeptide (Gln-Lys) (interchain with K-? in acceptor proteins)).

Belongs to the prokaryotic ubiquitin-like protein family. Strongly interacts with the proteasome-associated ATPase ARC through a hydrophobic interface; the interacting region of Pup lies in its C-terminal half. There is one Pup binding site per ARC hexamer ring. In terms of processing, is modified by deamidation of its C-terminal glutamine to glutamate by the deamidase Dop, a prerequisite to the subsequent pupylation process.

It participates in protein degradation; proteasomal Pup-dependent pathway. Functionally, protein modifier that is covalently attached to lysine residues of substrate proteins, thereby targeting them for proteasomal degradation. The tagging system is termed pupylation. The polypeptide is Prokaryotic ubiquitin-like protein Pup (Frankia casuarinae (strain DSM 45818 / CECT 9043 / HFP020203 / CcI3)).